The primary structure comprises 411 residues: Allantoate amidohydrolase (411 aa).

Residues histidine 81, aspartate 92, glutamate 127, and histidine 190 each contribute to the Zn(2+) site. Allantoate is bound by residues arginine 215, asparagine 275, and arginine 288. Histidine 382 lines the Zn(2+) pocket.

It belongs to the peptidase M20 family. Homodimer. Requires Zn(2+) as cofactor.

It localises to the cytoplasm. It carries out the reaction allantoate + H2O + 2 H(+) = (S)-2-ureidoglycine + NH4(+) + CO2. Its pathway is nitrogen metabolism; (S)-allantoin degradation. Its activity is regulated as follows. Sulfate could be an allosteric effector of the enzyme that is responsible for stabilizing substrate binding. In addition, this anion effector may act as a counterion during enzyme-mediated catalysis. In terms of biological role, involved in the anaerobic nitrogen utilization via the assimilation of allantoin. Catalyzes specifically the hydrolysis of allantoate to yield CO2, NH3 and S-ureidoglycine, which is unstable and readily undergoes a second deamination by S-ureidoglycine aminohydrolase AllE to yield S-ureidoglycolate and NH3. In vivo, the spontaneous release of S-ureidoglycolate and ammonia from S-ureidoglycine appears to be too slow to sustain an efficient flux of nitrogen. The protein is Allantoate amidohydrolase of Escherichia coli (strain K12).